Here is a 236-residue protein sequence, read N- to C-terminus: Phosphoribosylaminoimidazole-succinocarboxamide synthase (236 aa).

Belongs to the SAICAR synthetase family.

The enzyme catalyses 5-amino-1-(5-phospho-D-ribosyl)imidazole-4-carboxylate + L-aspartate + ATP = (2S)-2-[5-amino-1-(5-phospho-beta-D-ribosyl)imidazole-4-carboxamido]succinate + ADP + phosphate + 2 H(+). It participates in purine metabolism; IMP biosynthesis via de novo pathway; 5-amino-1-(5-phospho-D-ribosyl)imidazole-4-carboxamide from 5-amino-1-(5-phospho-D-ribosyl)imidazole-4-carboxylate: step 1/2. The chain is Phosphoribosylaminoimidazole-succinocarboxamide synthase from Rickettsia canadensis (strain McKiel).